The chain runs to 334 residues: Beta-ketoacyl-[acyl-carrier-protein] synthase III (334 aa).

Active-site residues include Cys-114 and His-253. An ACP-binding region spans residues 254–258 (QANIR). Asn-283 is an active-site residue.

Belongs to the thiolase-like superfamily. FabH family. As to quaternary structure, homodimer.

It localises to the cytoplasm. The catalysed reaction is malonyl-[ACP] + acetyl-CoA + H(+) = 3-oxobutanoyl-[ACP] + CO2 + CoA. It participates in lipid metabolism; fatty acid biosynthesis. In terms of biological role, catalyzes the condensation reaction of fatty acid synthesis by the addition to an acyl acceptor of two carbons from malonyl-ACP. Catalyzes the first condensation reaction which initiates fatty acid synthesis and may therefore play a role in governing the total rate of fatty acid production. Possesses both acetoacetyl-ACP synthase and acetyl transacylase activities. Its substrate specificity determines the biosynthesis of branched-chain and/or straight-chain of fatty acids. The polypeptide is Beta-ketoacyl-[acyl-carrier-protein] synthase III (Campylobacter curvus (strain 525.92)).